Consider the following 416-residue polypeptide: Protein PBN1 (416 aa).

Residues 1-385 (MVTRHRVTVL…PDTKDYSKIK (385 aa)) are Lumenal-facing. Residues N24, N85, N120, N212, and N365 are each glycosylated (N-linked (GlcNAc...) asparagine). A helical; Signal-anchor for type III membrane protein transmembrane segment spans residues 386–405 (NGTLLCLLISIIYIFSKVFG). The Cytoplasmic portion of the chain corresponds to 406-416 (NNKKKRSVKRE).

This sequence belongs to the PIGX family. In terms of processing, N-glycosylated.

It is found in the endoplasmic reticulum membrane. Its pathway is glycolipid biosynthesis; glycosylphosphatidylinositol-anchor biosynthesis. Required for proper folding and/or the stability of a subset of proteins in the endoplasmic reticulum. Aids the autocatalytic processing of PRB1. Component of glycosylphosphatidylinositol-mannosyltransferase 1 which transfers the first of the 4 mannoses in the GPI-anchor precursors during GPI-anchor biosynthesis. Probably acts by stabilizing the mannosyltransferase GPI14. The protein is Protein PBN1 (PBN1) of Saccharomyces cerevisiae (strain ATCC 204508 / S288c) (Baker's yeast).